Here is a 279-residue protein sequence, read N- to C-terminus: Elongation factor Ts (279 aa).

Positions 80-83 (TDFV) are involved in Mg(2+) ion dislocation from EF-Tu.

The protein belongs to the EF-Ts family.

It localises to the cytoplasm. Associates with the EF-Tu.GDP complex and induces the exchange of GDP to GTP. It remains bound to the aminoacyl-tRNA.EF-Tu.GTP complex up to the GTP hydrolysis stage on the ribosome. The polypeptide is Elongation factor Ts (Borreliella afzelii (strain PKo) (Borrelia afzelii)).